Here is a 156-residue protein sequence, read N- to C-terminus: Snaclec A10 (156 aa).

The first 23 residues, 1 to 23, serve as a signal peptide directing secretion; it reads MGRSISVSFGLLVVFLSLSGIGA. Intrachain disulfides connect Cys27–Cys38, Cys55–Cys154, and Cys129–Cys146. One can recognise a C-type lectin domain in the interval 34–155; it reads YDQHCYQAVD…CGQPYRFTCE (122 aa).

Belongs to the snaclec family. In terms of assembly, heterodimer; disulfide-linked. In terms of tissue distribution, expressed by the venom gland.

Its subcellular location is the secreted. Interferes with one step of hemostasis (modulation of platelet aggregation, or coagulation cascade, for example). In Macrovipera lebetinus (Levantine viper), this protein is Snaclec A10.